Here is a 117-residue protein sequence, read N- to C-terminus: Large ribosomal subunit protein uL18 (117 aa).

It belongs to the universal ribosomal protein uL18 family. In terms of assembly, part of the 50S ribosomal subunit; part of the 5S rRNA/L5/L18/L25 subcomplex. Contacts the 5S and 23S rRNAs.

This is one of the proteins that bind and probably mediate the attachment of the 5S RNA into the large ribosomal subunit, where it forms part of the central protuberance. This is Large ribosomal subunit protein uL18 from Klebsiella pneumoniae subsp. pneumoniae (strain ATCC 700721 / MGH 78578).